The chain runs to 315 residues: Methionyl-tRNA formyltransferase (315 aa).

113–116 contributes to the (6S)-5,6,7,8-tetrahydrofolate binding site; sequence SLLP.

The protein belongs to the Fmt family.

It carries out the reaction L-methionyl-tRNA(fMet) + (6R)-10-formyltetrahydrofolate = N-formyl-L-methionyl-tRNA(fMet) + (6S)-5,6,7,8-tetrahydrofolate + H(+). Functionally, attaches a formyl group to the free amino group of methionyl-tRNA(fMet). The formyl group appears to play a dual role in the initiator identity of N-formylmethionyl-tRNA by promoting its recognition by IF2 and preventing the misappropriation of this tRNA by the elongation apparatus. The protein is Methionyl-tRNA formyltransferase of Salmonella dublin (strain CT_02021853).